Reading from the N-terminus, the 372-residue chain is N-methyl-L-tryptophan oxidase (372 aa).

An FAD-binding site is contributed by 4-34 (DLIIIGSGSVGAAAGYYATRAGLKVLMTDAH). C307 bears the S-8alpha-FAD cysteine mark.

This sequence belongs to the MSOX/MTOX family. MTOX subfamily. As to quaternary structure, monomer. FAD serves as cofactor.

The catalysed reaction is N(alpha)-methyl-L-tryptophan + O2 + H2O = L-tryptophan + formaldehyde + H2O2. Functionally, catalyzes the oxidative demethylation of N-methyl-L-tryptophan. In Salmonella agona (strain SL483), this protein is N-methyl-L-tryptophan oxidase.